The following is a 241-amino-acid chain: Ribonuclease HII (241 aa).

The 185-residue stretch at 57 to 241 folds into the RNase H type-2 domain; it reads NFIAGVDEAG…RTYVEKILKG (185 aa). Positions 63, 64, and 155 each coordinate a divalent metal cation.

Belongs to the RNase HII family. Mn(2+) serves as cofactor. The cofactor is Mg(2+).

The protein resides in the cytoplasm. The catalysed reaction is Endonucleolytic cleavage to 5'-phosphomonoester.. Endonuclease that specifically degrades the RNA of RNA-DNA hybrids. The chain is Ribonuclease HII from Caldanaerobacter subterraneus subsp. tengcongensis (strain DSM 15242 / JCM 11007 / NBRC 100824 / MB4) (Thermoanaerobacter tengcongensis).